The chain runs to 653 residues: Cytidine monophosphate-N-acetylneuraminic acid hydroxylase (653 aa).

Residues 11-120 form the Rieske domain; the sequence is LSPEETSELK…PEYNEDGSLD (110 aa). Residues cysteine 62, histidine 64, cysteine 83, and histidine 86 each coordinate [2Fe-2S] cluster. Residues 596–622 are disordered; the sequence is WNPSQATPAVEAKDPSSDSKDSATKPG. Residues 606-618 show a composition bias toward basic and acidic residues; the sequence is EAKDPSSDSKDSA. Residues 630–647 traverse the membrane as a helical segment; it reads LLRPLGIVVALVGVGVAI.

Belongs to the CMP-Neu5Ac hydroxylase family. [2Fe-2S] cluster serves as cofactor.

It localises to the membrane. The catalysed reaction is CMP-N-acetyl-beta-neuraminate + 2 Fe(II)-[cytochrome b5] + O2 + 2 H(+) = CMP-N-glycoloyl-beta-neuraminate + 2 Fe(III)-[cytochrome b5] + H2O. Its pathway is amino-sugar metabolism; N-acetylneuraminate metabolism. Functionally, sialic acids are components of carbohydrate chains of glycoconjugates and are involved in cell-cell recognition and cell-pathogen interactions. Catalyzes the conversion of CMP-N-acetylneuraminic acid (CMP-Neu5Ac) into its hydroxylated derivative CMP-N-glycolylneuraminic acid (CMP-Neu5Gc), a sialic acid abundantly expressed at the surface of many cells. The sequence is that of Cytidine monophosphate-N-acetylneuraminic acid hydroxylase (cnh) from Asterias rubens (Common European starfish).